A 122-amino-acid chain; its full sequence is Small ribosomal subunit protein uS13 (122 aa).

The tract at residues 97–122 (PVRGQRTHTNARTRKGPAKAIAGKKK) is disordered.

This sequence belongs to the universal ribosomal protein uS13 family. In terms of assembly, part of the 30S ribosomal subunit. Forms a loose heterodimer with protein S19. Forms two bridges to the 50S subunit in the 70S ribosome.

Its function is as follows. Located at the top of the head of the 30S subunit, it contacts several helices of the 16S rRNA. In the 70S ribosome it contacts the 23S rRNA (bridge B1a) and protein L5 of the 50S subunit (bridge B1b), connecting the 2 subunits; these bridges are implicated in subunit movement. Contacts the tRNAs in the A and P-sites. The sequence is that of Small ribosomal subunit protein uS13 from Brucella anthropi (strain ATCC 49188 / DSM 6882 / CCUG 24695 / JCM 21032 / LMG 3331 / NBRC 15819 / NCTC 12168 / Alc 37) (Ochrobactrum anthropi).